The following is a 110-amino-acid chain: Phosphoribosyl-ATP pyrophosphatase (110 aa).

This sequence belongs to the PRA-PH family.

Its subcellular location is the cytoplasm. The catalysed reaction is 1-(5-phospho-beta-D-ribosyl)-ATP + H2O = 1-(5-phospho-beta-D-ribosyl)-5'-AMP + diphosphate + H(+). Its pathway is amino-acid biosynthesis; L-histidine biosynthesis; L-histidine from 5-phospho-alpha-D-ribose 1-diphosphate: step 2/9. This chain is Phosphoribosyl-ATP pyrophosphatase (hisE), found in Azotobacter chroococcum mcd 1.